The chain runs to 315 residues: tRNA wybutosine-synthesizing protein 5 (315 aa).

The JmjC domain maps to 102 to 267 (DEKYYLRSLG…YDTTDTYGNK (166 aa)). Tyrosine 106 serves as a coordination point for 2-oxoglutarate. Residues histidine 160 and aspartate 162 each contribute to the Fe cation site. 2-oxoglutarate-binding residues include asparagine 166 and lysine 175. Histidine 235 is a Fe cation binding site.

It belongs to the TYW5 family. In terms of assembly, homodimer. Fe(2+) is required as a cofactor.

It catalyses the reaction 7-[(3S)-3-amino-3-carboxypropyl]wyosine(37) in tRNA(Phe) + 2-oxoglutarate + O2 = 7-(2-hydroxy-3-amino-3-carboxypropyl)wyosine(37) in tRNA(Phe) + succinate + CO2. It participates in tRNA modification; wybutosine-tRNA(Phe) biosynthesis. In terms of biological role, tRNA hydroxylase that acts as a component of the wybutosine biosynthesis pathway. Wybutosine is a hyper modified guanosine with a tricyclic base found at the 3'-position adjacent to the anticodon of eukaryotic phenylalanine tRNA. Catalyzes the hydroxylation of 7-(a-amino-a-carboxypropyl)wyosine (yW-72) into undermodified hydroxywybutosine (OHyW*). OHyW* being further transformed into hydroxywybutosine (OHyW) by LCMT2/TYW4. OHyW is a derivative of wybutosine found in higher eukaryotes. The polypeptide is tRNA wybutosine-synthesizing protein 5 (Tyw5) (Mus musculus (Mouse)).